The following is a 60-amino-acid chain: Large ribosomal subunit protein bL32 (60 aa).

The interval 1–27 (MAVPRNRLSNARKNSKRAHHAKKPKSL) is disordered. Basic residues predominate over residues 13 to 25 (KNSKRAHHAKKPK).

It belongs to the bacterial ribosomal protein bL32 family.

In Protochlamydia amoebophila (strain UWE25), this protein is Large ribosomal subunit protein bL32.